The primary structure comprises 185 residues: MELLRQGEHLHSTSRSTLESKCRKYKLIMQNDGNLVLYIGSLKSQSDEYCLWSSASCGKGHGPYRLSMQEDGNLVIYDSRNSAIWASGTMGHGVRGHYSMKLRSSGQIVVYDKYKQILYSSKPCTRDHLLSLPCAKPSGHPQSAYPPQQPGYGYPAQPGYPPQPGYPPQHGYPPQHGYPQQPGYY.

Residues 1–123 (MELLRQGEHL…YKQILYSSKP (123 aa)) form the Bulb-type lectin domain. The segment at 138–185 (SGHPQSAYPPQQPGYGYPAQPGYPPQPGYPPQHGYPPQHGYPQQPGYY) is disordered. Positions 141-157 (PQSAYPPQQPGYGYPAQ) are enriched in low complexity. A run of 5 repeats spans residues 153–158 (GYPAQP), 159–164 (GYPPQP), 165–170 (GYPPQH), 171–176 (GYPPQH), and 177–182 (GYPQQP). The segment at 153 to 182 (GYPAQPGYPPQPGYPPQHGYPPQHGYPQQP) is 5 X 6 AA tandem repeats of G-Y-P-X-Q-[PH]. Over residues 158-171 (PGYPPQPGYPPQHG) the composition is skewed to pro residues. A compositionally biased stretch (low complexity) spans 172-185 (YPPQHGYPQQPGYY).

As to quaternary structure, homodimer in solution. In terms of processing, the N-terminus is blocked.

Its subcellular location is the golgi apparatus membrane. The protein localises to the endomembrane system. The protein resides in the cytoplasm. It localises to the cytoskeleton. Functionally, may have a role in cell motility. It has high affinity for both G-actin and F-actin. Binds to vesicle membranes via mannose residues and, by way of its interaction with actin, links these membranes to the cytoskeleton. The chain is Comitin (comA) from Dictyostelium discoideum (Social amoeba).